We begin with the raw amino-acid sequence, 274 residues long: Large ribosomal subunit protein uL2 (274 aa).

Residues 223-264 are disordered; it reads VAMNPVDHPHGGGEGRTSGGRHPVSPWGVPTKGYKTRSNKRT.

The protein belongs to the universal ribosomal protein uL2 family. Part of the 50S ribosomal subunit. Forms a bridge to the 30S subunit in the 70S ribosome.

Functionally, one of the primary rRNA binding proteins. Required for association of the 30S and 50S subunits to form the 70S ribosome, for tRNA binding and peptide bond formation. It has been suggested to have peptidyltransferase activity; this is somewhat controversial. Makes several contacts with the 16S rRNA in the 70S ribosome. The chain is Large ribosomal subunit protein uL2 from Shewanella denitrificans (strain OS217 / ATCC BAA-1090 / DSM 15013).